A 271-amino-acid polypeptide reads, in one-letter code: Carboxy-terminal domain RNA polymerase II polypeptide A small phosphatase 2 (271 aa).

Ser5 carries the phosphoserine modification. In terms of domain architecture, FCP1 homology spans 97 to 255 (EDQGRICVVI…LNLIPIFEEL (159 aa)). The active-site 4-aspartylphosphate intermediate is Asp107. Mg(2+) is bound by residues Asp107, Asp109, and Asn218. Asp109 acts as the Proton donor in catalysis.

As to quaternary structure, monomer. Interacts with REST. Mg(2+) is required as a cofactor. Expression is restricted to non-neuronal tissues. Highest expression in pancreas and lowest in liver.

The protein localises to the nucleus. The catalysed reaction is O-phospho-L-seryl-[protein] + H2O = L-seryl-[protein] + phosphate. It catalyses the reaction O-phospho-L-threonyl-[protein] + H2O = L-threonyl-[protein] + phosphate. Preferentially catalyzes the dephosphorylation of 'Ser-5' within the tandem 7 residue repeats in the C-terminal domain (CTD) of the largest RNA polymerase II subunit POLR2A. Negatively regulates RNA polymerase II transcription, possibly by controlling the transition from initiation/capping to processive transcript elongation. Recruited by REST to neuronal genes that contain RE-1 elements, leading to neuronal gene silencing in non-neuronal cells. May contribute to the development of sarcomas. This Homo sapiens (Human) protein is Carboxy-terminal domain RNA polymerase II polypeptide A small phosphatase 2 (CTDSP2).